The chain runs to 705 residues: MIKLYNTCMDFKCLNDVECSHPEKILGPHLEDAYIIRAYIPIARAAFILIDNKKYQMIDNGKVFEYRSDNEINDYKILYIDDSGYEKTIDDPYRFRPEISDYDIYLYGTGRLFEAYKTFGAHLKTIKDVSGCNFVVWAPSALSVSVVGNFNHWTPGMHPMINVNDSGIWALFIPGIKENEVYKFAIKTKNNEIKMKTDPFAFYTEKRPRTGSIVINDDFHWTDNSFKRSENALSIYEMHLGSWKRNNGDYYNYREIADMLIDHLKKTGFNCVEIMPVMEHPLDISWGYQVVNYFAPTSRYGKPDDFKYLVNRLHENNIMVILDFVPAHFPDDDYGLYMFDGTHLYDYEDPRMGRTPDWGTNIFDFGRNGVRSFIASAAVFWIDKYHVDGLRFDAVTSMIYLDFGRKPGEWIPNINGGNINLEAVSLLKEINDYIHNKYYNVITVAEESSTYPGITSESGLNFNYKWNLGWMHDTLDFFHEDPLYRKYRINNLTFSVMYMYSENFILPVSHDEVVYGKGSLYRKMPGNKNEKISNVKLFLSYMFSYPGKKLLFMGNEFAQKNEWNVLSQLSWNDLDDGKYVMELIHDLNNLYKNDFNFYNDKNFSWIDFNDKTNTVISFNRGNAVCIFNFTPVERENYAIGVDYPSRYIEIINTDSKKYNGGNILNESIYACKYPMHGRRYSIEIDLPPLAAVIMEPEDLNGSSGN.

Catalysis depends on D393, which acts as the Nucleophile. Residue E446 is the Proton donor of the active site.

Belongs to the glycosyl hydrolase 13 family. GlgB subfamily. As to quaternary structure, monomer.

It carries out the reaction Transfers a segment of a (1-&gt;4)-alpha-D-glucan chain to a primary hydroxy group in a similar glucan chain.. It functions in the pathway glycan biosynthesis; glycogen biosynthesis. Functionally, catalyzes the formation of the alpha-1,6-glucosidic linkages in glycogen by scission of a 1,4-alpha-linked oligosaccharide from growing alpha-1,4-glucan chains and the subsequent attachment of the oligosaccharide to the alpha-1,6 position. This chain is 1,4-alpha-glucan branching enzyme GlgB, found in Picrophilus torridus (strain ATCC 700027 / DSM 9790 / JCM 10055 / NBRC 100828 / KAW 2/3).